Here is a 341-residue protein sequence, read N- to C-terminus: tRNA dimethylallyltransferase (341 aa).

Position 15-22 (15-22) interacts with ATP; sequence GPTAAGKT. Substrate is bound at residue 17–22; the sequence is TAAGKT. Interaction with substrate tRNA stretches follow at residues 44-47, 168-172, 253-258, and 302-309; these read DSAL, QRIQR, RCVGYR, and KRQITWLR.

The protein belongs to the IPP transferase family. Monomer. The cofactor is Mg(2+).

The enzyme catalyses adenosine(37) in tRNA + dimethylallyl diphosphate = N(6)-dimethylallyladenosine(37) in tRNA + diphosphate. Its function is as follows. Catalyzes the transfer of a dimethylallyl group onto the adenine at position 37 in tRNAs that read codons beginning with uridine, leading to the formation of N6-(dimethylallyl)adenosine (i(6)A). The polypeptide is tRNA dimethylallyltransferase (Verminephrobacter eiseniae (strain EF01-2)).